The following is a 70-amino-acid chain: Putative membrane protein insertion efficiency factor (70 aa).

This sequence belongs to the UPF0161 family.

Its subcellular location is the cell membrane. Could be involved in insertion of integral membrane proteins into the membrane. This Clostridium novyi (strain NT) protein is Putative membrane protein insertion efficiency factor.